A 379-amino-acid polypeptide reads, in one-letter code: uncharacterized protein (379 aa).

29 to 36 (GPLNSGKT) contacts ATP.

It belongs to the archaeal ATPase family.

This is an uncharacterized protein from Methanocaldococcus jannaschii (strain ATCC 43067 / DSM 2661 / JAL-1 / JCM 10045 / NBRC 100440) (Methanococcus jannaschii).